The primary structure comprises 977 residues: Bifunctional glutamine synthetase adenylyltransferase/adenylyl-removing enzyme (977 aa).

Residues Met1–Asp457 form an adenylyl removase region. The adenylyl transferase stretch occupies residues Gly468 to Ser977.

This sequence belongs to the GlnE family. Requires Mg(2+) as cofactor.

It catalyses the reaction [glutamine synthetase]-O(4)-(5'-adenylyl)-L-tyrosine + phosphate = [glutamine synthetase]-L-tyrosine + ADP. The enzyme catalyses [glutamine synthetase]-L-tyrosine + ATP = [glutamine synthetase]-O(4)-(5'-adenylyl)-L-tyrosine + diphosphate. Involved in the regulation of glutamine synthetase GlnA, a key enzyme in the process to assimilate ammonia. When cellular nitrogen levels are high, the C-terminal adenylyl transferase (AT) inactivates GlnA by covalent transfer of an adenylyl group from ATP to specific tyrosine residue of GlnA, thus reducing its activity. Conversely, when nitrogen levels are low, the N-terminal adenylyl removase (AR) activates GlnA by removing the adenylyl group by phosphorolysis, increasing its activity. The regulatory region of GlnE binds the signal transduction protein PII (GlnB) which indicates the nitrogen status of the cell. This Pseudomonas putida (strain ATCC 47054 / DSM 6125 / CFBP 8728 / NCIMB 11950 / KT2440) protein is Bifunctional glutamine synthetase adenylyltransferase/adenylyl-removing enzyme.